Consider the following 314-residue polypeptide: ATP synthase gamma chain (314 aa).

This sequence belongs to the ATPase gamma chain family. In terms of assembly, F-type ATPases have 2 components, CF(1) - the catalytic core - and CF(0) - the membrane proton channel. CF(1) has five subunits: alpha(3), beta(3), gamma(1), delta(1), epsilon(1). CF(0) has three main subunits: a, b and c.

Its subcellular location is the cellular thylakoid membrane. Produces ATP from ADP in the presence of a proton gradient across the membrane. The gamma chain is believed to be important in regulating ATPase activity and the flow of protons through the CF(0) complex. In Crocosphaera subtropica (strain ATCC 51142 / BH68) (Cyanothece sp. (strain ATCC 51142)), this protein is ATP synthase gamma chain.